Consider the following 428-residue polypeptide: 3-phosphoshikimate 1-carboxyvinyltransferase (428 aa).

3-phosphoshikimate-binding residues include K20, S21, and R25. K20 is a binding site for phosphoenolpyruvate. Residues G92 and R120 each coordinate phosphoenolpyruvate. 3-phosphoshikimate is bound by residues S166, Q168, D314, and K341. Residue Q168 participates in phosphoenolpyruvate binding. The active-site Proton acceptor is D314. Positions 345 and 387 each coordinate phosphoenolpyruvate.

It belongs to the EPSP synthase family. As to quaternary structure, monomer.

The protein localises to the cytoplasm. The catalysed reaction is 3-phosphoshikimate + phosphoenolpyruvate = 5-O-(1-carboxyvinyl)-3-phosphoshikimate + phosphate. It participates in metabolic intermediate biosynthesis; chorismate biosynthesis; chorismate from D-erythrose 4-phosphate and phosphoenolpyruvate: step 6/7. Functionally, catalyzes the transfer of the enolpyruvyl moiety of phosphoenolpyruvate (PEP) to the 5-hydroxyl of shikimate-3-phosphate (S3P) to produce enolpyruvyl shikimate-3-phosphate and inorganic phosphate. The polypeptide is 3-phosphoshikimate 1-carboxyvinyltransferase (Listeria monocytogenes serotype 4a (strain HCC23)).